The primary structure comprises 200 residues: Phosphoheptose isomerase (200 aa).

Residues 37–199 (VLGCITAGGK…DVQLLGEQDL (163 aa)) form the SIS domain. Residue 52-54 (NGG) coordinates substrate. Residues histidine 61 and glutamate 65 each contribute to the Zn(2+) site. Substrate is bound by residues glutamate 65, 94-95 (ND), 120-122 (TTS), serine 125, and glutamine 175. Residues glutamine 175 and histidine 183 each coordinate Zn(2+).

This sequence belongs to the SIS family. GmhA subfamily. Homotetramer. Zn(2+) is required as a cofactor.

The protein resides in the cytoplasm. The catalysed reaction is 2 D-sedoheptulose 7-phosphate = D-glycero-alpha-D-manno-heptose 7-phosphate + D-glycero-beta-D-manno-heptose 7-phosphate. It participates in carbohydrate biosynthesis; D-glycero-D-manno-heptose 7-phosphate biosynthesis; D-glycero-alpha-D-manno-heptose 7-phosphate and D-glycero-beta-D-manno-heptose 7-phosphate from sedoheptulose 7-phosphate: step 1/1. Catalyzes the isomerization of sedoheptulose 7-phosphate in D-glycero-D-manno-heptose 7-phosphate. This is Phosphoheptose isomerase from Methylibium petroleiphilum (strain ATCC BAA-1232 / LMG 22953 / PM1).